The primary structure comprises 346 residues: C5a anaphylatoxin chemotactic receptor 1 (346 aa).

The Extracellular segment spans residues 1–33 (MDDNNSDWTSYDFGNDTIPSPNEISLSHIGTRH). 2 N-linked (GlcNAc...) asparagine glycosylation sites follow: Asn4 and Asn15. The helical transmembrane segment at 34-60 (WITLVCYGIVFLLGVPGNALVVWVTGF) threads the bilayer. Topologically, residues 61–65 (RMPNS) are cytoplasmic. The helical transmembrane segment at 66–89 (VNAQWFLNLAIADLLCCLSLPILM) threads the bilayer. Residues 90-106 (VPLAQDQHWPFGALACK) lie on the Extracellular side of the membrane. Cysteines 105 and 183 form a disulfide. The helical transmembrane segment at 107-128 (LFSGIFYMMMYCSVLLLVVISL) threads the bilayer. At 129 to 149 (DRFLLVTKPVWCQNNRQPRQA) the chain is on the cytoplasmic side. The helical transmembrane segment at 150-170 (RILCFIIWILGLLGSSPYFAH) threads the bilayer. At 171 to 194 (MEIQHHSETKTVCTGSYSSLGHAW) the chain is on the extracellular side. A helical transmembrane segment spans residues 195–220 (AITIIRSFLFFLLPFLIICISHWKVY). Over 221–238 (HMTSSGRRQRDKSSRTLR) the chain is Cytoplasmic. The helical transmembrane segment at 239–261 (VILALVLGFFLCWTPLHIVDLLI) threads the bilayer. Residues 262-279 (LVSDQPSERFEVNLNLAH) lie on the Extracellular side of the membrane. The chain crosses the membrane as a helical span at residues 280–300 (VLTLCLAYINSCLNPLLYVCL). The Cytoplasmic segment spans residues 301–346 (GRGFKENLISSLRSVLHFASEAPTHGPSMTTNSKSTTDGVFREKPV). Residues 323–346 (PTHGPSMTTNSKSTTDGVFREKPV) form a disordered region. Positions 327-338 (PSMTTNSKSTTD) are enriched in polar residues.

The protein belongs to the G-protein coupled receptor 1 family.

It is found in the cell membrane. Its function is as follows. Receptor for the chemotactic and inflammatory peptide anaphylatoxin C5a. This receptor stimulates chemotaxis, granule enzyme release and superoxide anion production. The polypeptide is C5a anaphylatoxin chemotactic receptor 1 (c5ar1) (Danio rerio (Zebrafish)).